A 259-amino-acid chain; its full sequence is MNLLEKTRKINAMLQKAAGRPVNFKEMAETLCEVIEANVFVVSRRGKLLGFAIKQSIENERMKRMLEERQFPEEYTKNLFNITETSPNIDINSEYTAFPVENRDLFKTGLTTIVPINGGGERLGTLILSRLDREFDNDDLILAEYGATVVGMEILREKAEEIEEEARSKAVVQMAISSLSYSELEAIEHIFEELDGTEGLLVASKIADRVGITRSVIVNALRKLESAGVIESRSLGMKGTYIKVLNDKFLSELEKLKSS.

Residues Met1–Leu155 form a GAF domain region. Positions Ala203–Arg222 form a DNA-binding region, H-T-H motif. Ser215 carries the post-translational modification Phosphoserine.

The protein belongs to the CodY family.

It localises to the cytoplasm. Functionally, DNA-binding global transcriptional regulator which is involved in the adaptive response to starvation and acts by directly or indirectly controlling the expression of numerous genes in response to nutrient availability. During rapid exponential growth, CodY is highly active and represses genes whose products allow adaptation to nutrient depletion. The polypeptide is Global transcriptional regulator CodY (Geobacillus kaustophilus (strain HTA426)).